A 255-amino-acid chain; its full sequence is Indole-3-glycerol phosphate synthase (255 aa).

It belongs to the TrpC family.

The enzyme catalyses 1-(2-carboxyphenylamino)-1-deoxy-D-ribulose 5-phosphate + H(+) = (1S,2R)-1-C-(indol-3-yl)glycerol 3-phosphate + CO2 + H2O. Its pathway is amino-acid biosynthesis; L-tryptophan biosynthesis; L-tryptophan from chorismate: step 4/5. The protein is Indole-3-glycerol phosphate synthase of Streptococcus gordonii (strain Challis / ATCC 35105 / BCRC 15272 / CH1 / DL1 / V288).